The following is a 545-amino-acid chain: Probable acyl-activating enzyme 4 (545 aa).

The protein belongs to the ATP-dependent AMP-binding enzyme family. In terms of tissue distribution, expressed in roots, leaves, stems, flowers and developing seeds.

May act as an acid--thiol ligase that activates carboxylic acids by forming acyl-CoAs. The polypeptide is Probable acyl-activating enzyme 4 (AEE4) (Arabidopsis thaliana (Mouse-ear cress)).